A 410-amino-acid chain; its full sequence is Peptidase T (410 aa).

Position 79 (histidine 79) interacts with Zn(2+). Aspartate 81 is an active-site residue. Aspartate 142 lines the Zn(2+) pocket. The Proton acceptor role is filled by glutamate 176. Positions 177, 199, and 381 each coordinate Zn(2+).

This sequence belongs to the peptidase M20B family. It depends on Zn(2+) as a cofactor.

It localises to the cytoplasm. The catalysed reaction is Release of the N-terminal residue from a tripeptide.. In terms of biological role, cleaves the N-terminal amino acid of tripeptides. This is Peptidase T from Brevibacillus brevis (strain 47 / JCM 6285 / NBRC 100599).